The primary structure comprises 325 residues: ATP synthase gamma chain (325 aa).

This sequence belongs to the ATPase gamma chain family. As to quaternary structure, F-type ATPases have 2 components, CF(1) - the catalytic core - and CF(0) - the membrane proton channel. CF(1) has five subunits: alpha(3), beta(3), gamma(1), delta(1), epsilon(1). CF(0) has three main subunits: a, b and c.

It localises to the cell membrane. Its function is as follows. Produces ATP from ADP in the presence of a proton gradient across the membrane. The gamma chain is believed to be important in regulating ATPase activity and the flow of protons through the CF(0) complex. This chain is ATP synthase gamma chain, found in Corynebacterium diphtheriae (strain ATCC 700971 / NCTC 13129 / Biotype gravis).